A 465-amino-acid chain; its full sequence is ATP synthase subunit beta (465 aa).

155 to 162 is an ATP binding site; sequence GGAGVGKT.

This sequence belongs to the ATPase alpha/beta chains family. In terms of assembly, F-type ATPases have 2 components, CF(1) - the catalytic core - and CF(0) - the membrane proton channel. CF(1) has five subunits: alpha(3), beta(3), gamma(1), delta(1), epsilon(1). CF(0) has three main subunits: a(1), b(2) and c(9-12). The alpha and beta chains form an alternating ring which encloses part of the gamma chain. CF(1) is attached to CF(0) by a central stalk formed by the gamma and epsilon chains, while a peripheral stalk is formed by the delta and b chains.

It is found in the cell membrane. The enzyme catalyses ATP + H2O + 4 H(+)(in) = ADP + phosphate + 5 H(+)(out). Its function is as follows. Produces ATP from ADP in the presence of a proton gradient across the membrane. The catalytic sites are hosted primarily by the beta subunits. The polypeptide is ATP synthase subunit beta (Buchnera aphidicola subsp. Acyrthosiphon pisum (strain 5A)).